A 128-amino-acid polypeptide reads, in one-letter code: Ribonuclease P protein component (128 aa).

The protein belongs to the RnpA family. In terms of assembly, consists of a catalytic RNA component (M1 or rnpB) and a protein subunit.

The catalysed reaction is Endonucleolytic cleavage of RNA, removing 5'-extranucleotides from tRNA precursor.. RNaseP catalyzes the removal of the 5'-leader sequence from pre-tRNA to produce the mature 5'-terminus. It can also cleave other RNA substrates such as 4.5S RNA. The protein component plays an auxiliary but essential role in vivo by binding to the 5'-leader sequence and broadening the substrate specificity of the ribozyme. This is Ribonuclease P protein component from Prochlorococcus marinus (strain MIT 9301).